The sequence spans 450 residues: Glucose-6-phosphate isomerase (450 aa).

The active-site Proton donor is glutamate 290. Catalysis depends on residues histidine 311 and lysine 425.

Belongs to the GPI family.

It is found in the cytoplasm. The catalysed reaction is alpha-D-glucose 6-phosphate = beta-D-fructose 6-phosphate. It participates in carbohydrate biosynthesis; gluconeogenesis. Its pathway is carbohydrate degradation; glycolysis; D-glyceraldehyde 3-phosphate and glycerone phosphate from D-glucose: step 2/4. Catalyzes the reversible isomerization of glucose-6-phosphate to fructose-6-phosphate. The polypeptide is Glucose-6-phosphate isomerase (Limosilactobacillus fermentum (Lactobacillus fermentum)).